Consider the following 282-residue polypeptide: tRNA uridine(34) hydroxylase (282 aa).

Residues D128 to Y222 enclose the Rhodanese domain. The active-site Cysteine persulfide intermediate is the C182.

This sequence belongs to the TrhO family.

It catalyses the reaction uridine(34) in tRNA + AH2 + O2 = 5-hydroxyuridine(34) in tRNA + A + H2O. Its function is as follows. Catalyzes oxygen-dependent 5-hydroxyuridine (ho5U) modification at position 34 in tRNAs. The sequence is that of tRNA uridine(34) hydroxylase from Ralstonia nicotianae (strain ATCC BAA-1114 / GMI1000) (Ralstonia solanacearum).